A 311-amino-acid chain; its full sequence is Eukaryotic translation initiation factor 3 subunit E (311 aa).

One can recognise a PCI domain in the interval 100–280; the sequence is VYYNYPKGRD…MGVKSVSIHE (181 aa).

Belongs to the eIF-3 subunit E family. In terms of assembly, component of the eukaryotic translation initiation factor 3 (eIF-3) complex.

Its subcellular location is the cytoplasm. Its function is as follows. Component of the eukaryotic translation initiation factor 3 (eIF-3) complex, which is involved in protein synthesis of a specialized repertoire of mRNAs and, together with other initiation factors, stimulates binding of mRNA and methionyl-tRNAi to the 40S ribosome. The eIF-3 complex specifically targets and initiates translation of a subset of mRNAs involved in cell proliferation. In Caenorhabditis briggsae, this protein is Eukaryotic translation initiation factor 3 subunit E.